A 309-amino-acid polypeptide reads, in one-letter code: Taste receptor type 2 member 20 (309 aa).

At 1 to 6 (MMSFLH) the chain is on the extracellular side. The chain crosses the membrane as a helical span at residues 7–27 (IVFSILVVVAFILGNFANGFI). Residues 28-46 (ALINFIAWVKRQKISSADQ) lie on the Cytoplasmic side of the membrane. Residues 47 to 67 (IIAALAVSRVGLLWVILLHWY) form a helical membrane-spanning segment. Over 68–79 (STVLNPTSSNLK) the chain is Extracellular. The helical transmembrane segment at 80 to 100 (VIIFISNAWAVTNHFSIWLAT) threads the bilayer. Topologically, residues 101-125 (SLSIFYLLKIVNFSRLIFHHLKRKA) are cytoplasmic. The chain crosses the membrane as a helical span at residues 126-146 (KSVVLVIVLGSLFFLVCHLVM). The Extracellular portion of the chain corresponds to 147 to 178 (KHTYINVWTEECEGNVTWKIKLRNAMHLSNLT). Residues Asn161 and Asn176 are each glycosylated (N-linked (GlcNAc...) asparagine). Residues 179-199 (VAMLANLIPFTLTLISFLLLI) traverse the membrane as a helical segment. Over 200 to 229 (YSLCKHLKKMQLHGKGSQDPSTKIHIKALQ) the chain is Cytoplasmic. The chain crosses the membrane as a helical span at residues 230-250 (TVTSFLILLAIYFLCLIISFW). Residues 251–259 (NFKMRPKEI) lie on the Extracellular side of the membrane. Residues 260-280 (VLMLCQAFGIIYPSFHSFILI) traverse the membrane as a helical segment. The Cytoplasmic segment spans residues 281-309 (WGNKTLKQTFLSVLWQVTCWAKGQNQSTP).

The protein belongs to the G-protein coupled receptor T2R family. In terms of tissue distribution, expressed in subsets of taste receptor cells of the tongue and exclusively in gustducin-positive cells.

Its subcellular location is the membrane. Its function is as follows. Receptor that may play a role in the perception of bitterness and is gustducin-linked. May play a role in sensing the chemical composition of the gastrointestinal content. The activity of this receptor may stimulate alpha gustducin, mediate PLC-beta-2 activation and lead to the gating of TRPM5. This is Taste receptor type 2 member 20 (TAS2R20) from Homo sapiens (Human).